The primary structure comprises 339 residues: Phenylalanine--tRNA ligase alpha subunit (339 aa).

E254 serves as a coordination point for Mg(2+).

Belongs to the class-II aminoacyl-tRNA synthetase family. Phe-tRNA synthetase alpha subunit type 1 subfamily. In terms of assembly, tetramer of two alpha and two beta subunits. Mg(2+) is required as a cofactor.

The protein resides in the cytoplasm. It catalyses the reaction tRNA(Phe) + L-phenylalanine + ATP = L-phenylalanyl-tRNA(Phe) + AMP + diphosphate + H(+). This Clostridium botulinum (strain Alaska E43 / Type E3) protein is Phenylalanine--tRNA ligase alpha subunit.